A 173-amino-acid polypeptide reads, in one-letter code: Thiol-disulfide oxidoreductase ResA (173 aa).

A helical; Signal-anchor for type II membrane protein membrane pass occupies residues 10 to 29 (VIILLILCGAVGFTLYQGYF). The Thioredoxin domain occupies 35–173 (MEIGKEAPNF…LEEYLKKITP (139 aa)). C73 and C76 are disulfide-bonded.

The protein belongs to the thioredoxin family. ResA subfamily.

The protein localises to the cell membrane. Its pathway is protein modification; cytochrome c assembly. Its function is as follows. Thiol-disulfide oxidoreductase which is required in disulfide reduction during c-type cytochrome synthesis. May accept reducing equivalents from CcdA, leading to breakage of disulfide bonds in apocytochrome c; following this reduction heme can be covalently attached. The protein is Thiol-disulfide oxidoreductase ResA of Bacillus thuringiensis subsp. konkukian (strain 97-27).